The chain runs to 97 residues: MQLRKEYLIAYDIEDNKTRTIIYKQLLAYGLKAVQKSVFWGYVSIAELNAIKRLFDSSLTISDKVFITRVNMHEQKLDYSFGYDDKTFKDWDEYGHI.

D12 is a binding site for Mg(2+).

This sequence belongs to the CRISPR-associated endoribonuclease Cas2 protein family. Homodimer, forms a heterotetramer with a Cas1 homodimer. Mg(2+) is required as a cofactor.

Functionally, CRISPR (clustered regularly interspaced short palindromic repeat) is an adaptive immune system that provides protection against mobile genetic elements (viruses, transposable elements and conjugative plasmids). CRISPR clusters contain sequences complementary to antecedent mobile elements and target invading nucleic acids. CRISPR clusters are transcribed and processed into CRISPR RNA (crRNA). Functions as a ssRNA-specific endoribonuclease. Involved in the integration of spacer DNA into the CRISPR cassette. This chain is CRISPR-associated endoribonuclease Cas2 1, found in Francisella tularensis subsp. novicida (strain U112).